The sequence spans 506 residues: Cytochrome P450 6a8 (506 aa).

C451 contacts heme.

This sequence belongs to the cytochrome P450 family. The cofactor is heme.

It is found in the endoplasmic reticulum membrane. It localises to the microsome membrane. In terms of biological role, involved in the metabolism of insect hormones and in the breakdown of synthetic insecticides. In Drosophila melanogaster (Fruit fly), this protein is Cytochrome P450 6a8 (Cyp6a8).